The chain runs to 550 residues: Probable asparagine synthetase [glutamine-hydrolyzing] (550 aa).

The active-site For GATase activity is the Cys2. A Glutamine amidotransferase type-2 domain is found at Cys2–Ser189. L-glutamine contacts are provided by residues Arg53–Met57, Asn78–Glu80, and Asp100. The 318-residue stretch at Tyr213–Tyr530 folds into the Asparagine synthetase domain. ATP contacts are provided by residues Leu256, Val284, and Ser360–Gly361.

The catalysed reaction is L-aspartate + L-glutamine + ATP + H2O = L-asparagine + L-glutamate + AMP + diphosphate + H(+). The protein operates within amino-acid biosynthesis; L-asparagine biosynthesis; L-asparagine from L-aspartate (L-Gln route): step 1/1. The chain is Probable asparagine synthetase [glutamine-hydrolyzing] from Acanthamoeba polyphaga mimivirus (APMV).